The primary structure comprises 362 residues: sn-glycerol-3-phosphate import ATP-binding protein UgpC (362 aa).

Residues 4–235 enclose the ABC transporter domain; sequence LTLQSVKKTY…PATVFVASFI (232 aa). ATP is bound at residue 37–44; the sequence is GPSGCGKS.

Belongs to the ABC transporter superfamily. sn-glycerol-3-phosphate importer (TC 3.A.1.1.3) family. As to quaternary structure, the complex is composed of two ATP-binding proteins (UgpC), two transmembrane proteins (UgpA and UgpE) and a solute-binding protein (UgpB).

The protein resides in the cell inner membrane. The catalysed reaction is sn-glycerol 3-phosphate(out) + ATP + H2O = sn-glycerol 3-phosphate(in) + ADP + phosphate + H(+). Functionally, part of the ABC transporter complex UgpBAEC involved in sn-glycerol-3-phosphate (G3P) import. Responsible for energy coupling to the transport system. This Paraburkholderia xenovorans (strain LB400) protein is sn-glycerol-3-phosphate import ATP-binding protein UgpC.